Reading from the N-terminus, the 366-residue chain is Glycine betaine monooxygenase reductase subunit (366 aa).

Residues 16–119 (NGRHLVRCVK…HGPVGLFNAI (104 aa)) enclose the FAD-binding FR-type domain. The region spanning 282 to 366 (HQVEFTATGK…VPKGDVVIDY (85 aa)) is the 2Fe-2S ferredoxin-type domain. Residues Cys316, Cys321, Cys324, and Cys354 each coordinate [2Fe-2S] cluster.

It in the N-terminal section; belongs to the FAD-binding oxidoreductase type 6 family. The system is composed of an oxygenase subunit (GbcA) and a reductase subunit (GbcB). FAD is required as a cofactor. The cofactor is [2Fe-2S] cluster.

The enzyme catalyses glycine betaine + NADH + O2 + H(+) = N,N-dimethylglycine + formaldehyde + NAD(+) + H2O. Its function is as follows. Involved in degradation of glycine betaine. Part of a Rieske-type oxygenase system that catalyzes the conversion of glycine betaine (GB) to dimethylglycine (DMG). This subunit is the ferredoxin reductase component of the system. Required for growth on choline and GB, but not for growth on DMG. This Pseudomonas aeruginosa (strain ATCC 15692 / DSM 22644 / CIP 104116 / JCM 14847 / LMG 12228 / 1C / PRS 101 / PAO1) protein is Glycine betaine monooxygenase reductase subunit.